The following is a 453-amino-acid chain: Protein LIAT1 (453 aa).

Residues 1–152 (METRGPGLAV…HLPSDSSTVS (152 aa)) form a disordered region. A lysine-rich domain region spans residues 82 to 103 (KRKVKKKKRKKKTKGSGKGDDK). The span at 83-96 (RKVKKKKRKKKTKG) shows a compositional bias: basic residues. Low complexity predominate over residues 106 to 117 (SQSLKSQPLSSS). Over residues 125–145 (CKERGPKPEHRQSKVEKKHLP) the composition is skewed to basic and acidic residues. Positions 145–197 (PSDSSTVSLPDFAEIENLANRINESLRWDGILADPEAEKERIRIYKLNRRKRY) are interaction with ATE1. 20 consecutive repeat copies span residues 201–210 (ALKGFHPDPE), 211–220 (ALKGFHPDPD), 221–230 (ALKGFHPDPE), 231–240 (ALKGFHPDPE), 241–250 (ALKGFHPDPE), 251–260 (ALKGFHPDPE), 261–270 (ALKGIHPDPE), 271–280 (ALKGIHPDPE), 281–290 (ALKGFHPDPE), 291–300 (ALKGFHPDPE), 301–310 (ALKGFHTDPE), 311–320 (ALKGFHIDPE), 321–330 (ALKGFHPDPK), 331–340 (ALKGFHPDPK), 341–350 (ALKGFHTDPE), 351–360 (ALKGFHPDPK), 361–370 (ALKGFHPDPE), 371–380 (ALKGFHPDPE), 381–390 (ALKGFHPDPE), and 391–400 (ALKGFHTDPN). The segment at 201–400 (ALKGFHPDPE…ALKGFHTDPN (200 aa)) is 20 X 10 AA approximate tandem repeat of A-L-K-G-F-H-P-D-P-E. Disordered stretches follow at residues 225-306 (FHPD…KGFH) and 320-432 (EALK…CPNL). The span at 320-396 (EALKGFHPDP…PDPEALKGFH (77 aa)) shows a compositional bias: basic and acidic residues.

Self-associates (via Lys-rich domain); targets LIAT1 to the nucleolus. Interacts with ATE1; it is not a substrate of ATE1, the interaction takes place in the cytoplasm and seems to increase ATE1 arginyltransferase activity. Interacts with JMJD6 and MRPS14. In terms of processing, post-translationally modified by JMJD6 lysyl-hydroxylase activity at its Lys-rich domain, which inhibits its self-association and nucleolar localization.

Its subcellular location is the nucleus. The protein localises to the nucleolus. It is found in the cytoplasm. Functionally, participates in nucleolar liquid-liquid phase separation (LLPS) through its N-terminal intrinsically disordered region (IDR). May be involved in ATE1-mediated N-terminal arginylation. This Homo sapiens (Human) protein is Protein LIAT1.